The sequence spans 201 residues: Recombination protein RecR (201 aa).

The segment at 58 to 73 (CEQCASITDTCPCRIC) adopts a C4-type zinc-finger fold. One can recognise a Toprim domain in the interval 81 to 178 (DKLCLVSEWD…ELSRLAQGIP (98 aa)).

Belongs to the RecR family.

Its function is as follows. May play a role in DNA repair. It seems to be involved in an RecBC-independent recombinational process of DNA repair. It may act with RecF and RecO. In Maridesulfovibrio salexigens (strain ATCC 14822 / DSM 2638 / NCIMB 8403 / VKM B-1763) (Desulfovibrio salexigens), this protein is Recombination protein RecR.